The primary structure comprises 495 residues: Neuronal acetylcholine receptor subunit beta-4 (495 aa).

Positions 1-20 (MRGTPLLLVSLFSLLQDGDC) are cleaved as a signal peptide. Residues 21 to 235 (RLANAEEKLM…IIKRKPLFYT (215 aa)) are Extracellular-facing. 4 N-linked (GlcNAc...) asparagine glycosylation sites follow: N35, N92, N137, and N165. C152 and C166 are oxidised to a cystine. Residues 236–256 (INLIIPCVLITSLAILVFYLP) form a helical membrane-spanning segment. Topologically, residues 257–264 (SDCGEKMT) are cytoplasmic. E261 provides a ligand contact to Na(+). Residues 265-285 (LCISVLLALTFFLLLISKIVP) form a helical membrane-spanning segment. Residues 286-297 (PTSLDIPLIGKY) are Extracellular-facing. The helical transmembrane segment at 298 to 318 (LLFTMVLVTFSIVTTVCVLNV) threads the bilayer. The Cytoplasmic portion of the chain corresponds to 319–463 (HHRSPSTHTM…WKFVAMVVDR (145 aa)). Residues 464–484 (LFLWVFVFVCILGTMGLFLPP) traverse the membrane as a helical segment. At 485-495 (LFQIHAPSKDS) the chain is on the extracellular side.

It belongs to the ligand-gated ion channel (TC 1.A.9) family. Acetylcholine receptor (TC 1.A.9.1) subfamily. Beta-4/CHRNB4 sub-subfamily. In terms of assembly, neuronal AChR is composed of two different types of subunits: alpha and beta. CHRNB4/Beta-4 subunit can be combined to CHRNA2/alpha-2, CHRNA3/alpha-3 or CHRNA4/alpha-4, CHRNA5/alpha-5 and CHRNB3/beta-3 to give rise to functional receptors. Forms stoichiometries such as (CHRNA3)2:(CHRNB4)3 or (CHRNA3:CHRNB4)2:CHRNB3. Interacts with RIC3; which is required for proper folding and assembly. Interacts with LYPD6. In terms of tissue distribution, in the brain, it is detected in the medial habenula. In the peripheral nervous system, it is found at least in the adrenal gland.

Its subcellular location is the synaptic cell membrane. It is found in the cell membrane. It catalyses the reaction Ca(2+)(in) = Ca(2+)(out). The catalysed reaction is K(+)(in) = K(+)(out). The enzyme catalyses Na(+)(in) = Na(+)(out). Its activity is regulated as follows. Activated by a myriad of ligands such as acetylcholine, cytisine, nicotine, choline and epibatidine. nAChR activity is inhibited by the antagonist alpha-conotoxins BuIA and MII, small disulfide-constrained peptides from cone snails. The heteropentamer CHRNA3:CHRNB4 activity is blocked by the alpha-conotoxin ImI and AuIB. Component of neuronal acetylcholine receptors (nAChRs) that function as pentameric, ligand-gated cation channels with high calcium permeability among other activities. nAChRs are excitatory neurotrasnmitter receptors formed by a collection of nAChR subunits known to mediate synaptic transmission in the nervous system and the neuromuscular junction. Each nAchR subunit confers differential attributes to channel properties, including activation, deactivation and desensitization kinetics, pH sensitivity, cation permeability, and binding to allosteric modulators. CHRNB4 forms heteropentameric neuronal acetylcholine receptors with CHRNA2, CHRNA3 and CHRNA4, as well as CHRNA5 and CHRNB3 as accesory subunits. CHRNA3:CHRNB4 being predominant in neurons of the autonomic ganglia, it is known as ganglionic nicotinic receptor. CHRNA3:CHRNB4 or CHRNA3:CHRNA5:CHRNB4 play also an important role in the habenulo-interpeduncular tract, modulating the mesolimbic dopamine system and affecting reward circuits and addiction. Hypothalamic CHRNA3:CHRNB4 nAChR activation by nicotine leads to activation of POMC neurons and a decrease in food intake. This is Neuronal acetylcholine receptor subunit beta-4 (Chrnb4) from Rattus norvegicus (Rat).